The following is a 286-amino-acid chain: Probable biotin transporter (286 aa).

EamA domains lie at 3 to 128 (YLLF…AIIR) and 139 to 277 (GFLL…LWVN). Helical transmembrane passes span 4 to 24 (LLFV…YLAG), 26 to 46 (VDSY…FLPL), 56 to 76 (FVGG…VCLY), 81 to 101 (VLTV…VALF), 109 to 129 (FNFW…IIRY), 136 to 156 (FLQG…GQVL), 174 to 194 (FGYF…LFGD), 203 to 223 (LQWG…QFWW), 234 to 254 (TLAV…LLIW), and 258 to 280 (ADLP…NRLG).

This sequence belongs to the drug/metabolite transporter (DMT) superfamily. 10 TMS drug/metabolite exporter (DME) (TC 2.A.7.3) family.

The protein localises to the cell inner membrane. It carries out the reaction biotin(in) = biotin(out). Uptake of biotin. The chain is Probable biotin transporter from Pseudomonas aeruginosa (strain ATCC 15692 / DSM 22644 / CIP 104116 / JCM 14847 / LMG 12228 / 1C / PRS 101 / PAO1).